A 231-amino-acid polypeptide reads, in one-letter code: Transmembrane protein 225 (231 aa).

Residues 1–13 (MVHILVRKVEATN) are Cytoplasmic-facing. Residues 14–34 (MFFSSWTLVFLAVGIIIEEWA) traverse the membrane as a helical segment. Residues 35-67 (ELKLGPQKPTITHSPWICCTPLWPSDGLEVIRN) lie on the Extracellular side of the membrane. A helical membrane pass occupies residues 68 to 88 (ILIVVLSLSFMHNLLLGFEFT). The Cytoplasmic portion of the chain corresponds to 89–97 (YMIPQTKYT). A helical membrane pass occupies residues 98 to 118 (LIMTACLAFLTGILLLGALLL). The Extracellular segment spans residues 119 to 135 (YHHMLRQGESVYYSSYK). A helical transmembrane segment spans residues 136–156 (ISWIIFTAYLNVLFLFISGFL). Residues 157–231 (SLLQYKQPID…IQARRVTWAL (75 aa)) lie on the Cytoplasmic side of the membrane. The short motif at 225-229 (RRVTW) is the RVxF element.

Interacts (via RVxF motif) with PPP1CC.

It is found in the cytoplasmic vesicle. The protein resides in the secretory vesicle. Its subcellular location is the acrosome membrane. Probably inhibits protein phosphatase 1 (PP1) in sperm via binding to catalytic subunit PPP1CC. The polypeptide is Transmembrane protein 225 (TMEM225) (Bos taurus (Bovine)).